The following is a 185-amino-acid chain: Elongation factor P (185 aa).

Belongs to the elongation factor P family.

Its subcellular location is the cytoplasm. Its pathway is protein biosynthesis; polypeptide chain elongation. Its function is as follows. Involved in peptide bond synthesis. Stimulates efficient translation and peptide-bond synthesis on native or reconstituted 70S ribosomes in vitro. Probably functions indirectly by altering the affinity of the ribosome for aminoacyl-tRNA, thus increasing their reactivity as acceptors for peptidyl transferase. This chain is Elongation factor P, found in Lachnoclostridium phytofermentans (strain ATCC 700394 / DSM 18823 / ISDg) (Clostridium phytofermentans).